A 66-amino-acid chain; its full sequence is Phylloseptin-Az3 (66 aa).

A signal peptide spans 1-22 (MAFLKKSLFLVLFLGLVSLSIC). A propeptide spanning residues 23–44 (EEEKRETEEEEYNQEDDDKSEE) is cleaved from the precursor. Position 65 is a phenylalanine amide (F65).

Expressed by the skin glands.

The protein resides in the secreted. In terms of biological role, has antimicrobial activity. The protein is Phylloseptin-Az3 of Pithecopus azureus (Orange-legged monkey tree frog).